A 163-amino-acid chain; its full sequence is Ribosome maturation factor RimP (163 aa).

It belongs to the RimP family.

It localises to the cytoplasm. Its function is as follows. Required for maturation of 30S ribosomal subunits. The polypeptide is Ribosome maturation factor RimP (Bordetella petrii (strain ATCC BAA-461 / DSM 12804 / CCUG 43448)).